Reading from the N-terminus, the 287-residue chain is Formamidopyrimidine-DNA glycosylase (287 aa).

Pro2 functions as the Schiff-base intermediate with DNA in the catalytic mechanism. Glu3 (proton donor) is an active-site residue. Residue Lys61 is the Proton donor; for beta-elimination activity of the active site. His95, Arg115, and Arg157 together coordinate DNA. The segment at 243–277 (NVYGRADQPCRRCGEPVRREAFMNRSSFSCPRCQP) adopts an FPG-type zinc-finger fold. Arg267 (proton donor; for delta-elimination activity) is an active-site residue.

Belongs to the FPG family. As to quaternary structure, monomer. Zn(2+) is required as a cofactor.

The catalysed reaction is Hydrolysis of DNA containing ring-opened 7-methylguanine residues, releasing 2,6-diamino-4-hydroxy-5-(N-methyl)formamidopyrimidine.. It catalyses the reaction 2'-deoxyribonucleotide-(2'-deoxyribose 5'-phosphate)-2'-deoxyribonucleotide-DNA = a 3'-end 2'-deoxyribonucleotide-(2,3-dehydro-2,3-deoxyribose 5'-phosphate)-DNA + a 5'-end 5'-phospho-2'-deoxyribonucleoside-DNA + H(+). Functionally, involved in base excision repair of DNA damaged by oxidation or by mutagenic agents. Acts as a DNA glycosylase that recognizes and removes damaged bases. Has a preference for oxidized purines, such as 7,8-dihydro-8-oxoguanine (8-oxoG). Has AP (apurinic/apyrimidinic) lyase activity and introduces nicks in the DNA strand. Cleaves the DNA backbone by beta-delta elimination to generate a single-strand break at the site of the removed base with both 3'- and 5'-phosphates. The polypeptide is Formamidopyrimidine-DNA glycosylase (Salinispora tropica (strain ATCC BAA-916 / DSM 44818 / JCM 13857 / NBRC 105044 / CNB-440)).